The following is a 688-amino-acid chain: SRSF protein kinase 2 (688 aa).

The segment at 1 to 65 (MSVNSEKSSS…EQEDPADYCK (65 aa)) is disordered. Positions 22-43 (LVPPPPPPPPPPPPPLPDPTPP) are enriched in pro residues. The segment covering 44–61 (EPEEEILGSDDEEQEDPA) has biased composition (acidic residues). A Phosphoserine modification is found at S52. A Protein kinase domain is found at 81 to 684 (YHVIRKLGWG…ASAGECLRHP (604 aa)). ATP-binding positions include 87–95 (LGWGHFSTV) and K110. D214 serves as the catalytic Proton acceptor. Disordered stretches follow at residues 239–277 (WQKAGAPPPSGSAVSTAPQQKPIGKISKNKKKKLKKKQK), 329–444 (GLEE…GRHK), and 469–501 (SVLSEGSPLTEQEESSPSHDRSRTVSASSTGDL). The segment covering 265 to 277 (SKNKKKKLKKKQK) has biased composition (basic residues). Position 380 is a phosphoserine (S380). A compositionally biased stretch (acidic residues) spans 397–421 (QLDDEDDDEEDCPNPEEYNLDEPNA). Over residues 423–433 (SDYTYSSSYEQ) the composition is skewed to polar residues. S475 carries the phosphoserine modification. Phosphothreonine is present on T478. Residues S484, S486, and S490 each carry the phosphoserine modification. Residue T492 is modified to Phosphothreonine; by PKB/AKT1. Residues S494 and S497 each carry the phosphoserine modification. Residue S588 is modified to Phosphoserine; by CK2.

It belongs to the protein kinase superfamily. CMGC Ser/Thr protein kinase family. Associates with U4/U6-U5 tri-small nuclear ribonucleoproteins (U4/U6-U5 tri-snRNPs). Interacts with PKB/AKT1 in a phosphorylation-dependent manner. The phosphorylated form (by PKB/AKT1) interacts with YWHAB and YWHAE. Interaction with YWHAB suppresses its cleavage by caspases and inhibits the release of its N-terminal pro-apoptotic fragment. Interacts with SFN. Interacts with ACIN1. Interacts with POLR2A/RNA polymerase II; the interaction occurs during the co-transcriptional formation of inappropriate R-loops. The cofactor is Mg(2+). In terms of processing, phosphorylation at Thr-492 by PKB/AKT1 enhances its stimulatory activity in triggering cyclin-D1 (CCND1) expression and promoting apoptosis in neurons, which can be blocked by YWHAB. It also enhances its protein kinase activity toward ACIN1 and SRSF2, promotes its nuclear translocation and prevents its proteolytic cleavage. Post-translationally, proteolytically cleaved at Asp-139 and Asp-403 by caspase-3 during apoptotic cell death. Cleavage at Asp-139 which is the major site of cleavage, produces a small N-terminal fragment that translocates into nucleus and promotes VP16-induced apoptosis. As to expression, highly expressed in brain, moderately expressed in heart and skeletal muscle and at low levels in lung, liver, and kidney.

Its subcellular location is the cytoplasm. The protein localises to the nucleus. It is found in the nucleoplasm. It localises to the nucleus speckle. The protein resides in the chromosome. The catalysed reaction is L-seryl-[protein] + ATP = O-phospho-L-seryl-[protein] + ADP + H(+). It catalyses the reaction L-threonyl-[protein] + ATP = O-phospho-L-threonyl-[protein] + ADP + H(+). Its activity is regulated as follows. Activated by phosphorylation on Ser-52 and Ser-588. Serine/arginine-rich protein-specific kinase which specifically phosphorylates its substrates at serine residues located in regions rich in arginine/serine dipeptides, known as RS domains and is involved in the phosphorylation of SR splicing factors and the regulation of splicing. Promotes neuronal apoptosis by up-regulating cyclin-D1 (CCND1) expression. This is done by the phosphorylation of SRSF2, leading to the suppression of p53/TP53 phosphorylation thereby relieving the repressive effect of p53/TP53 on cyclin-D1 (CCND1) expression. Phosphorylates ACIN1, and redistributes it from the nuclear speckles to the nucleoplasm, resulting in cyclin A1 but not cyclin A2 up-regulation. Plays an essential role in spliceosomal B complex formation via the phosphorylation of DDX23/PRP28. Probably by phosphorylating DDX23, leads to the suppression of incorrect R-loops formed during transcription; R-loops are composed of a DNA:RNA hybrid and the associated non-template single-stranded DNA. Can mediate hepatitis B virus (HBV) core protein phosphorylation. Plays a negative role in the regulation of HBV replication through a mechanism not involving the phosphorylation of the core protein but by reducing the packaging efficiency of the pregenomic RNA (pgRNA) without affecting the formation of the viral core particles. This chain is SRSF protein kinase 2, found in Homo sapiens (Human).